The chain runs to 383 residues: Acetylornithine deacetylase (383 aa).

His80 contacts Zn(2+). Asp82 is a catalytic residue. A Zn(2+)-binding site is contributed by Asp112. Residue Glu144 is part of the active site. Zn(2+) is bound by residues Glu145, Glu169, and His355.

This sequence belongs to the peptidase M20A family. ArgE subfamily. As to quaternary structure, homodimer. Requires Zn(2+) as cofactor. The cofactor is Co(2+). Glutathione is required as a cofactor.

It localises to the cytoplasm. It catalyses the reaction N(2)-acetyl-L-ornithine + H2O = L-ornithine + acetate. The protein operates within amino-acid biosynthesis; L-arginine biosynthesis; L-ornithine from N(2)-acetyl-L-ornithine (linear): step 1/1. Its function is as follows. Catalyzes the hydrolysis of the amide bond of N(2)-acetylated L-amino acids. Cleaves the acetyl group from N-acetyl-L-ornithine to form L-ornithine, an intermediate in L-arginine biosynthesis pathway, and a branchpoint in the synthesis of polyamines. In Escherichia coli O157:H7, this protein is Acetylornithine deacetylase.